A 129-amino-acid polypeptide reads, in one-letter code: Phosphoribosyl-AMP cyclohydrolase (129 aa).

A Mg(2+)-binding site is contributed by aspartate 76. Cysteine 77 provides a ligand contact to Zn(2+). Residues aspartate 78 and aspartate 80 each coordinate Mg(2+). Positions 97 and 104 each coordinate Zn(2+).

The protein belongs to the PRA-CH family. In terms of assembly, homodimer. Mg(2+) serves as cofactor. Requires Zn(2+) as cofactor.

It is found in the cytoplasm. The enzyme catalyses 1-(5-phospho-beta-D-ribosyl)-5'-AMP + H2O = 1-(5-phospho-beta-D-ribosyl)-5-[(5-phospho-beta-D-ribosylamino)methylideneamino]imidazole-4-carboxamide. It functions in the pathway amino-acid biosynthesis; L-histidine biosynthesis; L-histidine from 5-phospho-alpha-D-ribose 1-diphosphate: step 3/9. Catalyzes the hydrolysis of the adenine ring of phosphoribosyl-AMP. The protein is Phosphoribosyl-AMP cyclohydrolase of Polaromonas sp. (strain JS666 / ATCC BAA-500).